Consider the following 87-residue polypeptide: Defensin alpha-like protein 1 (87 aa).

A signal peptide spans 1-19 (MKTLILLSALVLLALQVQA). A propeptide spanning residues 20–56 (DPIQEAEEETKTEEQPADEDQDVSVSFEGPEASAVQD) is cleaved from the precursor. Positions 23–41 (QEAEEETKTEEQPADEDQD) are enriched in acidic residues. A disordered region spans residues 23–43 (QEAEEETKTEEQPADEDQDVS).

Belongs to the alpha-defensin family. As to quaternary structure, antiparallel homodimer; disulfide-linked. As to expression, specifically expressed in small intestine (jejunum and ileum). Probably expressed by Paneth cells at the base of intestinal crypts. Coexpressed with MMP7 in small intestine.

It localises to the secreted. Its function is as follows. Intestinal defense peptide. Has potent antibacterial activity against Gram-negative bacteria E.coli O157:H7, S.typhimurium DT104, and K.pneumoniae; and against Gram-positive bacteria S.aureus, methicillin-resistant S.aureus and L.monocytogenes. Remains active in the presence of NaCl and Mg(2+). Probably functions by disrupting bacterial membrane integrity. However, does not show cytotoxic activity towards human intestinal cells. This chain is Defensin alpha-like protein 1, found in Rattus norvegicus (Rat).